The chain runs to 357 residues: Serpentine receptor class epsilon-31 (357 aa).

Transmembrane regions (helical) follow at residues 28-48 (VISI…NLSI), 61-81 (LMFL…GKFI), 121-141 (LLIF…FGIL), 165-185 (IPIF…FIVI), 192-212 (IIAR…WLFV), 253-273 (LVAV…SLTF), and 283-303 (FVEN…MFSI).

This sequence belongs to the nematode receptor-like protein sre family.

Its subcellular location is the membrane. This Caenorhabditis elegans protein is Serpentine receptor class epsilon-31 (sre-31).